The primary structure comprises 1038 residues: Importin-7 (1038 aa).

Residue methionine 1 is modified to N-acetylmethionine. One can recognise an Importin N-terminal domain in the interval 22–101 (AERQLNEAHK…RENIVEAIIH (80 aa)). Residues 881-910 (EHENDSDDDEDAEDDDETEELGSDEDDIDE) form a disordered region. The segment covering 884-910 (NDSDDDEDAEDDDETEELGSDEDDIDE) has biased composition (acidic residues). Phosphoserine is present on serine 886. Threonine 898 carries the post-translational modification Phosphothreonine. A phosphoserine mark is found at serine 903 and serine 1020.

This sequence belongs to the importin beta family. As to quaternary structure, forms a heterodimer with KPNB1. Interacts with histone H1. Interacts with H2A, H2B, H3 and H4 histones. Interacts with SNUPN and XPO1. Interacts with RPS7 and RPL5. Interacts with RPL23A (via BIB domain). Binds directly to nuclear pore complexes. Interacts with SMAD4 and NUP93; translocates SMAD4 to the nucleus through the NPC upon BMP7 stimulation resulting in activation of SMAD4 signaling. Interacts with phosphorylated SMAD2; the interaction facilitates translocation of SMAD2 to the nucleus. Interacts with SRP19. Interacts with RUNX2; the interaction inhibits RUNX2 nuclear translocation in osteoblasts. Interacts with HDAC6, DLX3 and KLF4; the interaction facilitates HDAC6, DLX3 and KLF4 nuclear translocation in dental papilla cells.

It is found in the cytoplasm. The protein resides in the nucleus. Functions in nuclear protein import, either by acting as autonomous nuclear transport receptor or as an adapter-like protein in association with the importin-beta subunit KPNB1. Acting autonomously is thought to serve itself as receptor for nuclear localization signals (NLS) and to promote translocation of import substrates through the nuclear pore complex (NPC) by an energy requiring, Ran-dependent mechanism. At the nucleoplasmic side of the NPC, Ran binds to importin, the importin/substrate complex dissociates and importin is re-exported from the nucleus to the cytoplasm where GTP hydrolysis releases Ran. Mediates autonomously the nuclear import of ribosomal proteins RPL23A, RPS7 and RPL5. In association with KPNB1 mediates the nuclear import of H1 histone and the Ran-binding site of IPO7 is not required but synergizes with that of KPNB1 in importin/substrate complex dissociation. Promotes odontoblast differentiation via promoting nuclear translocation of DLX3, KLF4, SMAD2, thereby facilitating the transcription of target genes that play a role in odontoblast differentiation. Facilitates BMP4-induced translocation of SMAD1 to the nucleus and recruitment to the MSX1 gene promoter, thereby promotes the expression of the odontogenic regulator MSX1 in dental mesenchymal cells. Also promotes odontoblast differentiation by facilitating the nuclear translocation of HDAC6 and subsequent repression of RUNX2 expression. Inhibits osteoblast differentiation by inhibiting nuclear translocation of RUNX2 and therefore inhibition of RUNX2 target gene transcription. In vitro, mediates nuclear import of H2A, H2B, H3 and H4 histones. This Mus musculus (Mouse) protein is Importin-7 (Ipo7).